The following is a 180-amino-acid chain: Protein GrpE (180 aa).

Basic and acidic residues predominate over residues 1 to 19; that stretch reads MAEKKRAQEQEKVQEDQKM. Residues 1-25 are disordered; it reads MAEKKRAQEQEKVQEDQKMQNEQNE.

It belongs to the GrpE family. As to quaternary structure, homodimer.

The protein resides in the cytoplasm. Its function is as follows. Participates actively in the response to hyperosmotic and heat shock by preventing the aggregation of stress-denatured proteins, in association with DnaK and GrpE. It is the nucleotide exchange factor for DnaK and may function as a thermosensor. Unfolded proteins bind initially to DnaJ; upon interaction with the DnaJ-bound protein, DnaK hydrolyzes its bound ATP, resulting in the formation of a stable complex. GrpE releases ADP from DnaK; ATP binding to DnaK triggers the release of the substrate protein, thus completing the reaction cycle. Several rounds of ATP-dependent interactions between DnaJ, DnaK and GrpE are required for fully efficient folding. The polypeptide is Protein GrpE (Nitratiruptor sp. (strain SB155-2)).